Consider the following 334-residue polypeptide: MDGVIVYCLNALVKHGEEINHIKNDFMIKPCCERVCEKVKNVHIGGQSKNNTVIADLPYMDNAVSDVCNSLYKKNVSRISRFANLIKIDDDDKTPTGVYNYFKPKDVIPVIISIGKDKDVCELLISSDISCACVELNSYHVAILPMDVSFFTKGNASLIILLFDFSIDAAPLLRSVTDNNVIISRHQRLHDELPSSNWFKFYISIKSDYCSILYMVVDGSVMHAIADNRTHAIISKNILDNTTINDECRCCYFEPQIRILDRDEMLNGSSCDMNRHCIMMNLPDVGKFGSSMLGKYEPDMIKIALSVAGNLIRNRDYIPGRRGYSYYVYGIASR.

It belongs to the orthopoxvirus OPG181 family.

The polypeptide is Protein OPG181 (OPG181) (Bos taurus (Bovine)).